A 146-amino-acid polypeptide reads, in one-letter code: 3-hydroxyacyl-[acyl-carrier-protein] dehydratase FabZ (146 aa).

Residue histidine 46 is part of the active site.

Belongs to the thioester dehydratase family. FabZ subfamily.

Its subcellular location is the cytoplasm. It carries out the reaction a (3R)-hydroxyacyl-[ACP] = a (2E)-enoyl-[ACP] + H2O. In terms of biological role, involved in unsaturated fatty acids biosynthesis. Catalyzes the dehydration of short chain beta-hydroxyacyl-ACPs and long chain saturated and unsaturated beta-hydroxyacyl-ACPs. The chain is 3-hydroxyacyl-[acyl-carrier-protein] dehydratase FabZ from Acinetobacter baumannii (strain ATCC 17978 / DSM 105126 / CIP 53.77 / LMG 1025 / NCDC KC755 / 5377).